The sequence spans 196 residues: NAD(P)H-quinone oxidoreductase subunit I (196 aa).

4Fe-4S ferredoxin-type domains are found at residues 54–83 (GRIH…VDWV) and 94–123 (KHYS…VTEE). [4Fe-4S] cluster contacts are provided by cysteine 63, cysteine 66, cysteine 69, cysteine 73, cysteine 103, cysteine 106, cysteine 109, and cysteine 113. The tract at residues 174 to 196 (PAGAQRAGERPEAIANTAKSSEN) is disordered.

Belongs to the complex I 23 kDa subunit family. NDH-1 is composed of at least 11 different subunits. [4Fe-4S] cluster serves as cofactor.

It localises to the cellular thylakoid membrane. The catalysed reaction is a plastoquinone + NADH + (n+1) H(+)(in) = a plastoquinol + NAD(+) + n H(+)(out). The enzyme catalyses a plastoquinone + NADPH + (n+1) H(+)(in) = a plastoquinol + NADP(+) + n H(+)(out). NDH-1 shuttles electrons from an unknown electron donor, via FMN and iron-sulfur (Fe-S) centers, to quinones in the respiratory and/or the photosynthetic chain. The immediate electron acceptor for the enzyme in this species is believed to be plastoquinone. Couples the redox reaction to proton translocation, and thus conserves the redox energy in a proton gradient. The protein is NAD(P)H-quinone oxidoreductase subunit I of Thermosynechococcus vestitus (strain NIES-2133 / IAM M-273 / BP-1).